Here is a 429-residue protein sequence, read N- to C-terminus: Probable electron transfer flavoprotein-quinone oxidoreductase YdiS (429 aa).

Residue 8–22 (AIVVGAGVAGSVAAL) participates in FAD binding.

The protein belongs to the ETF-QO/FixC family. The cofactor is FAD.

In terms of biological role, probably accepts electrons from YdiQ/YdiR and reduces a quinone. This is Probable electron transfer flavoprotein-quinone oxidoreductase YdiS (ydiS) from Escherichia coli (strain K12).